The primary structure comprises 232 residues: Orotidine 5'-phosphate decarboxylase (232 aa).

Substrate is bound by residues Asp-11, Lys-33, 61-70 (DMKLFDIGAT), Thr-116, Arg-179, Gln-188, Gly-208, and Arg-209. Lys-63 serves as the catalytic Proton donor.

This sequence belongs to the OMP decarboxylase family. Type 1 subfamily. Homodimer.

The enzyme catalyses orotidine 5'-phosphate + H(+) = UMP + CO2. It participates in pyrimidine metabolism; UMP biosynthesis via de novo pathway; UMP from orotate: step 2/2. Its function is as follows. Catalyzes the decarboxylation of orotidine 5'-monophosphate (OMP) to uridine 5'-monophosphate (UMP). This chain is Orotidine 5'-phosphate decarboxylase, found in Cereibacter sphaeroides (strain ATCC 17023 / DSM 158 / JCM 6121 / CCUG 31486 / LMG 2827 / NBRC 12203 / NCIMB 8253 / ATH 2.4.1.) (Rhodobacter sphaeroides).